The chain runs to 215 residues: MTTQRHYSPIDRLLLQADMAMRTLLPFSGQPYRPSPAIVQPEAQMSDEDTRHVAGLMRINHTGEVCAQALYQGQALTAKLPQVRQAMEHAAEEEIDHLAWCEQRIRQLGSHPSVLNPLFYGLSFGIGAAAGLISDKVSLGFVAATEDQVCKHLNEHLEQLPAEDEKSRAILEQMRIDEEHHAETALEAGGFRFPAPVKFGMSLLAKVMTKSTYRI.

Residues Glu-64, Glu-94, His-97, Glu-146, Glu-178, and His-181 each contribute to the Fe cation site.

The protein belongs to the COQ7 family. Fe cation is required as a cofactor.

It localises to the cell membrane. It catalyses the reaction a 5-methoxy-2-methyl-3-(all-trans-polyprenyl)benzene-1,4-diol + AH2 + O2 = a 3-demethylubiquinol + A + H2O. The protein operates within cofactor biosynthesis; ubiquinone biosynthesis. In terms of biological role, catalyzes the hydroxylation of 2-nonaprenyl-3-methyl-6-methoxy-1,4-benzoquinol during ubiquinone biosynthesis. The polypeptide is 3-demethoxyubiquinol 3-hydroxylase (Pseudomonas fluorescens (strain ATCC BAA-477 / NRRL B-23932 / Pf-5)).